The primary structure comprises 396 residues: tRNA(Met) cytidine acetate ligase (396 aa).

Residues 9–22 (IVEY…HLHH), glycine 103, asparagine 154, and arginine 179 each bind ATP.

The protein belongs to the TmcAL family.

It localises to the cytoplasm. It carries out the reaction cytidine(34) in elongator tRNA(Met) + acetate + ATP = N(4)-acetylcytidine(34) in elongator tRNA(Met) + AMP + diphosphate. In terms of biological role, catalyzes the formation of N(4)-acetylcytidine (ac(4)C) at the wobble position of elongator tRNA(Met), using acetate and ATP as substrates. First activates an acetate ion to form acetyladenylate (Ac-AMP) and then transfers the acetyl group to tRNA to form ac(4)C34. In Fusobacterium nucleatum subsp. nucleatum (strain ATCC 25586 / DSM 15643 / BCRC 10681 / CIP 101130 / JCM 8532 / KCTC 2640 / LMG 13131 / VPI 4355), this protein is tRNA(Met) cytidine acetate ligase.